Here is a 291-residue protein sequence, read N- to C-terminus: Transmembrane protein 41B (291 aa).

Residues 1–38 (MAKGRVAERSQMGADHTTPVGDGAAGTRGPAAPGSRDY) are disordered. Threonine 18 bears the Phosphothreonine mark. The segment covering 21-34 (GDGAAGTRGPAAPG) has biased composition (low complexity). Phosphoserine is present on serine 35. Helical transmembrane passes span 52–72 (MSLL…FLVY), 109–129 (FYVQ…TFAI), 147–169 (LALF…LSYL), 197–217 (LINY…FINI), 225–245 (PLKV…FVAI), and 262–282 (SWNS…PAIF). The interval 140–251 (GFLYPFPLAL…FVAIKAGTTL (112 aa)) is VTT domain; required for its function in autophagy.

This sequence belongs to the TMEM41 family. Interacts with VMP1. Interacts with COPA, COPB1, VDAC1 and ERLIN2. Interacts with ATG2A. Interacts with SURF4.

It is found in the endoplasmic reticulum membrane. The protein localises to the endomembrane system. It carries out the reaction a 1,2-diacyl-sn-glycero-3-phospho-L-serine(in) = a 1,2-diacyl-sn-glycero-3-phospho-L-serine(out). It catalyses the reaction cholesterol(in) = cholesterol(out). The catalysed reaction is a 1,2-diacyl-sn-glycero-3-phosphocholine(in) = a 1,2-diacyl-sn-glycero-3-phosphocholine(out). The enzyme catalyses a 1,2-diacyl-sn-glycero-3-phosphoethanolamine(in) = a 1,2-diacyl-sn-glycero-3-phosphoethanolamine(out). Functionally, phospholipid scramblase involved in lipid homeostasis and membrane dynamics processes. Has phospholipid scramblase activity toward cholesterol and phosphatidylserine, as well as phosphatidylethanolamine and phosphatidylcholine. Required for autophagosome formation: participates in early stages of autophagosome biogenesis at the endoplasmic reticulum (ER) membrane by reequilibrating the leaflets of the ER as lipids are extracted by ATG2 (ATG2A or ATG2B) to mediate autophagosome assembly. In addition to autophagy, involved in other processes in which phospholipid scramblase activity is required. Required for normal motor neuron development. The polypeptide is Transmembrane protein 41B (Pongo abelii (Sumatran orangutan)).